Here is a 512-residue protein sequence, read N- to C-terminus: 2,3-bisphosphoglycerate-independent phosphoglycerate mutase (512 aa).

Residues aspartate 14 and serine 64 each coordinate Mn(2+). Residue serine 64 is the Phosphoserine intermediate of the active site. Residues histidine 125, 155–156 (RD), arginine 187, arginine 193, 259–262 (RADR), and lysine 332 contribute to the substrate site. The Mn(2+) site is built by aspartate 399, histidine 403, aspartate 440, histidine 441, and histidine 459.

This sequence belongs to the BPG-independent phosphoglycerate mutase family. In terms of assembly, monomer. The cofactor is Mn(2+).

It carries out the reaction (2R)-2-phosphoglycerate = (2R)-3-phosphoglycerate. Its pathway is carbohydrate degradation; glycolysis; pyruvate from D-glyceraldehyde 3-phosphate: step 3/5. Catalyzes the interconversion of 2-phosphoglycerate and 3-phosphoglycerate. The polypeptide is 2,3-bisphosphoglycerate-independent phosphoglycerate mutase (Vesicomyosocius okutanii subsp. Calyptogena okutanii (strain HA)).